A 97-amino-acid polypeptide reads, in one-letter code: Integration host factor subunit alpha (97 aa).

This sequence belongs to the bacterial histone-like protein family. Heterodimer of an alpha and a beta chain.

In terms of biological role, this protein is one of the two subunits of integration host factor, a specific DNA-binding protein that functions in genetic recombination as well as in transcriptional and translational control. This chain is Integration host factor subunit alpha, found in Acinetobacter baylyi (strain ATCC 33305 / BD413 / ADP1).